Consider the following 290-residue polypeptide: Elongation factor Ts, mitochondrial 1 (290 aa).

This sequence belongs to the EF-Ts family.

It localises to the mitochondrion. Functionally, associates with the EF-Tu.GDP complex and induces the exchange of GDP to GTP. It remains bound to the aminoacyl-tRNA.EF-Tu.GTP complex up to the GTP hydrolysis stage on the ribosome. This chain is Elongation factor Ts, mitochondrial 1, found in Postia placenta (strain ATCC 44394 / Madison 698-R) (Brown rot fungus).